The sequence spans 329 residues: Prostaglandin reductase 1 (329 aa).

T18 carries the post-translational modification Phosphothreonine. The residue at position 20 (S20) is a Phosphoserine. Residues 152–155 (GAVG), K178, Y193, N217, 239–245 (CGAISQY), 270–272 (FIV), and N321 contribute to the NADP(+) site. K178 bears the N6-(2-hydroxyisobutyryl)lysine; alternate mark. K178 carries the N6-acetyllysine; alternate modification.

The protein belongs to the NADP-dependent oxidoreductase L4BD family. In terms of assembly, monomer or homodimer.

The protein localises to the cytoplasm. It catalyses the reaction 13,14-dihydro-15-oxo-prostaglandin E1 + NADP(+) = 15-oxoprostaglandin E1 + NADPH + H(+). The enzyme catalyses 13,14-dihydro-15-oxo-prostaglandin E2 + NADP(+) = 15-oxoprostaglandin E2 + NADPH + H(+). The catalysed reaction is 13,14-dihydro-15-oxo-prostaglandin F1alpha + NADP(+) = 15-oxoprostaglandin F1alpha + NADPH + H(+). It carries out the reaction 13,14-dihydro-15-oxo-PGF2alpha + NADP(+) = 15-oxoprostaglandin F2alpha + NADPH + H(+). It catalyses the reaction leukotriene B4 + NADP(+) = 12-oxo-leukotriene B4 + NADPH + H(+). The enzyme catalyses 20-hydroxy-leukotriene B4 + NADP(+) = 12-oxo-20-hydroxy-leukotriene B4 + NADPH + H(+). The catalysed reaction is 6-trans-leukotriene B4 + NADP(+) = 12-oxo-(5S)-hydroxy-(6E,8E,10E,14Z)-eicosatetraenoate + NADPH + H(+). It carries out the reaction (5S,12S)-dihydroxy-(6E,10E,12E,14Z)-eicosatetraenoate + NADP(+) = 12-oxo-(5S)-hydroxy-(6E,8E,10E,14Z)-eicosatetraenoate + NADPH + H(+). It catalyses the reaction an n-alkanal + NADP(+) = an alk-2-enal + NADPH + H(+). The enzyme catalyses hexanal + NADP(+) = (E)-hex-2-enal + NADPH + H(+). The catalysed reaction is octanal + NADP(+) = (2E)-octenal + NADPH + H(+). It carries out the reaction decanal + NADP(+) = (2E)-decenal + NADPH + H(+). It catalyses the reaction dodecanal + NADP(+) = (2E)-dodecenal + NADPH + H(+). The enzyme catalyses 4-hydroxynonanal + NADP(+) = (E)-4-hydroxynon-2-enal + NADPH + H(+). The catalysed reaction is pentan-2-one + NADP(+) = (E)-pent-3-en-2-one + NADPH + H(+). It carries out the reaction nonan-2-one + NADP(+) = (3E)-nonen-2-one + NADPH + H(+). Its function is as follows. NAD(P)H-dependent oxidoreductase involved in metabolic inactivation of pro- and anti-inflammatory eicosanoids: prostaglandins (PG), leukotrienes (LT) and lipoxins (LX). Catalyzes with high efficiency the reduction of the 13,14 double bond of 15-oxoPGs, including 15-oxo-PGE1, 15-oxo-PGE2, 15-oxo-PGF1-alpha and 15-oxo-PGF2-alpha. Catalyzes with lower efficiency the oxidation of the hydroxyl group at C12 of LTB4 and its derivatives, converting them into biologically less active 12-oxo-LTB4 metabolites. Reduces 15-oxo-LXA4 to 13,14 dihydro-15-oxo-LXA4, enhancing neutrophil recruitment at the inflammatory site. Plays a role in metabolic detoxification of alkenals and ketones. Reduces alpha,beta-unsaturated alkenals and ketones, particularly those with medium-chain length, showing highest affinity toward (2E)-decenal and (3E)-3-nonen-2-one. Inactivates 4-hydroxy-2-nonenal, a cytotoxic lipid constituent of oxidized low-density lipoprotein particles. This Rattus norvegicus (Rat) protein is Prostaglandin reductase 1 (Ptgr1).